The following is a 292-amino-acid chain: MSTISAALVMQLRERTGAGMMECKKFLIATNGDIEQAIIEMRKAGQAKADKKADRVAAEGIIVIARSSDERTAVMLEINSETDFVARDENFTNFANAVADVALTSLPKNIEDLSNQALSSGATVEQARQELVAKIGENIKLRRLEKMHCDGVIGYYLHGSRIGVMVALKNGSEALAKDIAMHVAASKPMVVSRDQVPAEAIENEREIFTAQAKESGKPQEIIDKMIDGRINKFIDEVSLLGQPYVKDPNIKVGQLLKEKNAEVISFVRYEVGEGIEKKEDNFVEEVMAQVRT.

The segment at 82–85 (TDFV) is involved in Mg(2+) ion dislocation from EF-Tu.

The protein belongs to the EF-Ts family.

Its subcellular location is the cytoplasm. Its function is as follows. Associates with the EF-Tu.GDP complex and induces the exchange of GDP to GTP. It remains bound to the aminoacyl-tRNA.EF-Tu.GTP complex up to the GTP hydrolysis stage on the ribosome. In Legionella pneumophila subsp. pneumophila (strain Philadelphia 1 / ATCC 33152 / DSM 7513), this protein is Elongation factor Ts.